A 2076-amino-acid chain; its full sequence is Protein Ycf2 (2076 aa).

1458–1465 is an ATP binding site; that stretch reads GSIGTGRS.

It belongs to the Ycf2 family.

The protein localises to the plastid. The protein resides in the chloroplast stroma. Probable ATPase of unknown function. Its presence in a non-photosynthetic plant (Epifagus virginiana) and experiments in tobacco indicate that it has an essential function which is probably not related to photosynthesis. The polypeptide is Protein Ycf2 (Acorus calamus (Sweet flag)).